The following is a 506-amino-acid chain: ATP synthase subunit alpha, chloroplastic (506 aa).

170 to 177 (GDRQTGKT) contacts ATP. Thr257 is modified (phosphothreonine).

It belongs to the ATPase alpha/beta chains family. In terms of assembly, F-type ATPases have 2 components, CF(1) - the catalytic core - and CF(0) - the membrane proton channel. CF(1) has five subunits: alpha(3), beta(3), gamma(1), delta(1), epsilon(1). CF(0) has four main subunits: a, b, b' and c.

The protein resides in the plastid. Its subcellular location is the chloroplast thylakoid membrane. It carries out the reaction ATP + H2O + 4 H(+)(in) = ADP + phosphate + 5 H(+)(out). In terms of biological role, produces ATP from ADP in the presence of a proton gradient across the membrane. The alpha chain is a regulatory subunit. The protein is ATP synthase subunit alpha, chloroplastic of Olimarabidopsis pumila (Dwarf rocket).